The chain runs to 453 residues: Acid phosphatase (453 aa).

The N-terminal stretch at M1–A18 is a signal peptide. Catalysis depends on H69, which acts as the Nucleophile. 6 N-linked (GlcNAc...) asparagine glycosylation sites follow: N95, N151, N183, N193, N243, and N319. Residue D331 is the Proton donor of the active site. N-linked (GlcNAc...) asparagine glycosylation is found at N410, N429, and N443.

This sequence belongs to the histidine acid phosphatase family.

It localises to the secreted. The protein localises to the cell wall. The catalysed reaction is a phosphate monoester + H2O = an alcohol + phosphate. The polypeptide is Acid phosphatase (pho1) (Schizosaccharomyces pombe (strain 972 / ATCC 24843) (Fission yeast)).